We begin with the raw amino-acid sequence, 412 residues long: MTTAPSLVPVTTPSQHGAGVPHLGIDPFALDYFADPYPEQETLREAGPVVYLDKWNVYGVARYAEVYAVLNDPLTFCSSRGVGLSDFKKEKPWRPPSLILEADPPAHTRTRAVLSKVLSPATMKRLRDGFAAAADAKIDELLARGGNIDAIADLAEAYPLSVFPDAMGLKQEGRENLLPYAGLVFNAFGPPNELRQSAIERSAPHQAYVAEQCQRPNLAPGGFGACIHAFSDTGEITPEEAPLLVRSLLSAGLDTTVNGIAAAVYCLARFPDEFARLRADPSLARNAFEEAVRFESPVQTFFRTTTRDVELAGATIGEGEKVLMFLGSANRDPRRWDDPDRYDITRKTSGHVGFGSGVHMCVGQLVARLEGEVVLAALARKVAAIEIAGPLKRRFNNTLRGLESLPIQLTPA.

Residues 94–97 (RPPS) and Ser-247 contribute to the substrate site. A heme-binding site is contributed by Cys-361.

Belongs to the cytochrome P450 family. Interacts with the ferredoxin-like iron-sulfur protein ThcC. It depends on heme as a cofactor.

The protein localises to the cytoplasm. The enzyme catalyses 4-methoxybenzoate + AH2 + O2 = 4-hydroxybenzoate + formaldehyde + A + H2O. Functionally, the oxidative demethylation of 4-methoxybenzoate requires the participation of the monooxygenase CYP199A2, the ferredoxin-like protein ThcC/RPA1872 and a ferredoxin reductase to mediate the transfer of electrons from NADH to CYP199A2. It is also active with 4-ethylbenzoate. This is Cytochrome p450 CYP199A2 from Rhodopseudomonas palustris (strain ATCC BAA-98 / CGA009).